Here is a 266-residue protein sequence, read N- to C-terminus: Glucosamine-6-phosphate deaminase (266 aa).

The active-site Proton acceptor; for enolization step is the Asp-72. The For ring-opening step role is filled by Asp-141. Catalysis depends on His-143, which acts as the Proton acceptor; for ring-opening step. Glu-148 acts as the For ring-opening step in catalysis.

Belongs to the glucosamine/galactosamine-6-phosphate isomerase family. NagB subfamily. In terms of assembly, homohexamer.

It catalyses the reaction alpha-D-glucosamine 6-phosphate + H2O = beta-D-fructose 6-phosphate + NH4(+). It participates in amino-sugar metabolism; N-acetylneuraminate degradation; D-fructose 6-phosphate from N-acetylneuraminate: step 5/5. With respect to regulation, allosterically activated by N-acetylglucosamine 6-phosphate (GlcNAc6P). Its function is as follows. Catalyzes the reversible isomerization-deamination of glucosamine 6-phosphate (GlcN6P) to form fructose 6-phosphate (Fru6P) and ammonium ion. This is Glucosamine-6-phosphate deaminase from Tolumonas auensis (strain DSM 9187 / NBRC 110442 / TA 4).